The chain runs to 113 residues: Spanin, outer lipoprotein subunit (113 aa).

A signal peptide spans 1–28 (MMQKKKLQPPLLVTIAALVLCLPLLLTG). C29 is lipidated: N-palmitoyl cysteine; by host. The S-diacylglycerol cysteine; by host moiety is linked to residue C29. Basic and acidic residues predominate over residues 91–105 (EQEIRRKEIYERRPE). The tract at residues 91 to 113 (EQEIRRKEIYERRPEPGGGAAAR) is disordered.

In terms of assembly, interacts with the spanin inner membrane subunit. Part of the spanin complex which spans the entire periplasmic space. The spanin complex is composed of spanin inner membrane subunit and spanin outer membrane subunit.

It localises to the host cell outer membrane. Its function is as follows. Component of the spanin complex that disrupts the host outer membrane and participates in cell lysis during virus exit. The spanin complex conducts the final step in host lysis by disrupting the outer membrane after holin and endolysin action have permeabilized the inner membrane and degraded the host peptidoglycans. Host outer membrane disruption is possibly due to local fusion between the inner and outer membrane performed by the spanin complex. The polypeptide is Spanin, outer lipoprotein subunit (Enterobacteriaceae (Bacteriophage Mu)).